Consider the following 1346-residue polypeptide: Zinc finger protein 541 (1346 aa).

2 disordered regions span residues 1 to 34 (MDQYSLGDEGALPSEMHLPSFSESQGLNCSDTLN) and 113 to 136 (EADEGGRATSGSARKGKRQHSSPQ). Residues 21–32 (FSESQGLNCSDT) are compositionally biased toward polar residues. 3 consecutive C2H2-type zinc fingers follow at residues 140 to 162 (LDCSLCGKVFSSASSLSKHYLTH), 168 to 190 (HVCKICSKAFKRQDHLTGHMLTH), and 196 to 220 (FVCIEQGCSKSYCDYRSLRRHYEVH). 4 disordered regions span residues 235–271 (ACGDSPHAHESAGQPPPSSLRSLVPPEARSPGSLLPH), 283–328 (VHQK…AAPA), 437–472 (SAVPSREGSESGPGPSSGSPSEESPPGPGGGLEDAL), and 578–744 (SQLP…GGYR). Composition is skewed to low complexity over residues 294–323 (PAGASDSEGRNTACPCPASSGSSSCTPAGP) and 440–458 (PSREGSESGPGPSSGSPSE). The segment covering 671 to 685 (PDISSLAKQLRSSKG) has biased composition (polar residues). The C2H2-type 4 zinc-finger motif lies at 838 to 860 (FVCKNCSQMFYTEKGLSSHMCFH). The interval 931–971 (AMGQEKDGEERDSKESSQQRKRKKRPPPSTAGEPGPAGCHQ) is disordered. Positions 934–948 (QEKDGEERDSKESSQ) are enriched in basic and acidic residues. Residues 1053 to 1145 (PHINIGSRFQ…VALETLLLRG (93 aa)) form the ELM2 domain. Residues 1160 to 1211 (TGSDVWTPIEKRLFKKAFYAHKKDFYLIHKMIQTKTVAQCVEYYYIWKKMIK) enclose the SANT domain. The disordered stretch occupies residues 1224-1281 (VKREPEEVERTEEKVPCSPRERPSHHPTPKLKTKSYRRESILSSSPNAGSKRTPELLG). Positions 1234-1247 (TEEKVPCSPRERPS) are enriched in basic and acidic residues. Basic residues predominate over residues 1248–1258 (HHPTPKLKTKS). Positions 1264 to 1273 (ILSSSPNAGS) are enriched in polar residues. The C2H2-type 5 zinc-finger motif lies at 1289–1311 (FPCRECERVFDKIKSRNAHMKRH).

In terms of assembly, interacts with DNTTIP1. Identified in a complex with KCDT19, HDAC1 and HSPA2. Component of a histone deacetylase complex containing DNTTIP1, ZNF541, HDAC1 and HDAC2. Identified in a complex with HDAC1, HDAC2, DNTTIP1 and KCTD19.

It localises to the nucleus. In terms of biological role, transcription regulator which is essential for male fertility and for the completion of meiotic prophase in spermatocytes. Regulates progression of the pachytene stage of meiotic prophase by activating the expression of genes involved in meiosis during spermatogenesis. Maintains the repression of pre-pachytene transcriptional programs, including meiotic double-strand breaks (DSB) formation genes in pachytene spermatocytes and suppresses aberrant DSB formation after mid-pachytene, thus ensuring meiosis progression. This chain is Zinc finger protein 541 (ZNF541), found in Homo sapiens (Human).